We begin with the raw amino-acid sequence, 475 residues long: Sulfate adenylyltransferase subunit 1 (475 aa).

One can recognise a tr-type G domain in the interval 25–239 (KSLLRFLTCG…EVLETVEIQR (215 aa)). Positions 34-41 (GSVDDGKS) are G1. GTP is bound at residue 34-41 (GSVDDGKS). The G2 stretch occupies residues 92 to 96 (GITID). The segment at 113–116 (DTPG) is G3. GTP is bound by residues 113-117 (DTPGH) and 168-171 (NKMD). The G4 stretch occupies residues 168-171 (NKMD). The tract at residues 206–208 (SAL) is G5.

Belongs to the TRAFAC class translation factor GTPase superfamily. Classic translation factor GTPase family. CysN/NodQ subfamily. In terms of assembly, heterodimer composed of CysD, the smaller subunit, and CysN.

The enzyme catalyses sulfate + ATP + H(+) = adenosine 5'-phosphosulfate + diphosphate. The protein operates within sulfur metabolism; hydrogen sulfide biosynthesis; sulfite from sulfate: step 1/3. With CysD forms the ATP sulfurylase (ATPS) that catalyzes the adenylation of sulfate producing adenosine 5'-phosphosulfate (APS) and diphosphate, the first enzymatic step in sulfur assimilation pathway. APS synthesis involves the formation of a high-energy phosphoric-sulfuric acid anhydride bond driven by GTP hydrolysis by CysN coupled to ATP hydrolysis by CysD. The polypeptide is Sulfate adenylyltransferase subunit 1 (Shigella boydii serotype 18 (strain CDC 3083-94 / BS512)).